Reading from the N-terminus, the 249-residue chain is uncharacterized protein (249 aa).

Positions 30-65 (KVDKLKKLEIKKLEDQKKLKEQEEKHRLTLIRLANA) form a coiled coil. The segment at 66 to 97 (PPQTNSINNNNNNNNNIKTNRPPLIYGEDKDK) is disordered.

This is an uncharacterized protein from Dictyostelium discoideum (Social amoeba).